Here is a 581-residue protein sequence, read N- to C-terminus: Solute carrier family 15 member 3 (581 aa).

The span at methionine 1–glycine 14 shows a compositional bias: basic and acidic residues. The segment at methionine 1–glycine 26 is disordered. A helical membrane pass occupies residues valine 38–leucine 58. Residues asparagine 61 and asparagine 66 are each glycosylated (N-linked (GlcNAc...) asparagine). The next 3 membrane-spanning stretches (helical) occupy residues alanine 76–valine 96, alanine 103–phenylalanine 123, and proline 155–valine 175. A glycan (N-linked (GlcNAc...) asparagine) is linked at asparagine 178. The chain crosses the membrane as a helical span at residues asparagine 200–isoleucine 220. The N-linked (GlcNAc...) asparagine glycan is linked to asparagine 223. A run of 2 helical transmembrane segments spans residues isoleucine 232 to isoleucine 252 and phenylalanine 310 to tyrosine 330. An N-linked (GlcNAc...) asparagine glycan is attached at asparagine 356. 2 helical membrane passes run threonine 369–leucine 389 and methionine 411–glutamate 431. Asparagine 439 carries an N-linked (GlcNAc...) asparagine glycan. 3 helical membrane-spanning segments follow: residues isoleucine 458–proline 478, glycine 497–leucine 517, and leucine 540–alanine 560.

Belongs to the major facilitator superfamily. Proton-dependent oligopeptide transporter (POT/PTR) (TC 2.A.17) family.

Its subcellular location is the lysosome membrane. It is found in the endosome membrane. It carries out the reaction glycylglycylglycine(out) + n H(+)(out) = glycylglycylglycine(in) + n H(+)(in). It catalyses the reaction carnosine(out) + n H(+)(out) = carnosine(in) + n H(+)(in). The catalysed reaction is L-histidine(out) + n H(+)(out) = L-histidine(in) + n H(+)(in). The enzyme catalyses N-acetyl-D-muramoyl-L-alanyl-D-isoglutamine(out) + n H(+)(out) = N-acetyl-D-muramoyl-L-alanyl-D-isoglutamine(in) + n H(+)(in). In terms of biological role, proton-coupled amino-acid transporter that transports free histidine and certain di- and tripeptides, and is involved in innate immune response. Also able to transport carnosine. Involved in the detection of microbial pathogens by toll-like receptors (TLRs) and NOD-like receptors (NLRs), probably by mediating transport of bacterial peptidoglycans across the endolysosomal membrane: catalyzes the transport of certain bacterial peptidoglycans, such as muramyl dipeptide (MDP), the NOD2 ligand. This chain is Solute carrier family 15 member 3, found in Homo sapiens (Human).